Here is a 303-residue protein sequence, read N- to C-terminus: Acetylglutamate kinase (303 aa).

Residues Gly-76–Gly-77, Arg-98, and Asn-199 contribute to the substrate site.

Belongs to the acetylglutamate kinase family. ArgB subfamily.

The protein localises to the cytoplasm. The catalysed reaction is N-acetyl-L-glutamate + ATP = N-acetyl-L-glutamyl 5-phosphate + ADP. Its pathway is amino-acid biosynthesis; L-arginine biosynthesis; N(2)-acetyl-L-ornithine from L-glutamate: step 2/4. Its function is as follows. Catalyzes the ATP-dependent phosphorylation of N-acetyl-L-glutamate. This Clavibacter sepedonicus (Clavibacter michiganensis subsp. sepedonicus) protein is Acetylglutamate kinase.